The sequence spans 951 residues: MMTSNILSRFLPPNGSPSVYETLRQQDAESNPSDVEERAGLEFEDDRRTQFSDRELEEAMVDAARDGIRSPSPSPSEPFLTQRSPQRTSGTATAKTGGRRRKHSRPRWMHQDPDDGDDDVPPSLLVEGHQDDDEMRSRLPPPPPSHRHPQRELSPAPGPSSRADRARWNTTREQLPLHNDGRGQRPGVIWSLGHPNLASVDPKEKAMWLWANVENLDNFLKDVYTYFLGNGIWSILLNRGLSLLTFAFVVGFSTFLTNCIDYRNFRGSRKMDDILIQQCTKKMSMSSTFLLWLLTVFWIGKAFQYLMDIRRLKHMHDFYYYLLGISDSEIQTISWQEVVSRLMTLRDANPATAGAVSARHRKFMGSQSKQRMDAHDIANRLMRKENYLIALVNKDILDLTLPIPFLRNRQLFSQTLEWNINLCIMDYVFNDQGQVRTLFLKDTHRKALSEGLRRRFIFAGIMNIFVAPFIVVYFLMHYFFRYFNEYKKNPAQIGSRQYTPLAEWKFREFNELWHLFERRVNMSYPFASRYVDQFPKDKTVQVAGFVAFVSGALASVLALVSIIDPELFLGFEITHDRTVLFYLGVFGSVWAFARGLVPEETNVFDPEFALLEVIDFTHYFPNHWKGRLHSDEVRKEFAVLYQMKIVIFLEEILSMIFTPFILWFSLPKCSDRLIDFFREFTVHVDGMGYLCSFAVFDFKKGTNVISQGGTGRRESGRQDLRADYFSTKDGKMLASYYGFLDNYGGNRPANPSSRRQFHPPPAFPTLGSPSAIEMGNIGERLERTQTRHGPAATFMGQQSGLGPGFGAAGFGDHASPAPSILLDPHHQPTASDFRTANRSALYPRFRSSRPVRPITDPIEDDNESPSAEIRRGAVKKSPHTTTGSSGGAIGTSDSNLGESWRMNLIGDELDKDTGEDGENVDEIAGNAGVLGLIQQFQKVSKDNRGRTTVGI.

The tract at residues 1 to 165 is disordered; it reads MMTSNILSRF…APGPSSRADR (165 aa). Topologically, residues 1–239 are cytoplasmic; the sequence is MMTSNILSRF…NGIWSILLNR (239 aa). A compositionally biased stretch (polar residues) spans 16 to 33; the sequence is SPSVYETLRQQDAESNPS. Residues 35–54 show a composition bias toward basic and acidic residues; that stretch reads VEERAGLEFEDDRRTQFSDR. The segment covering 79–94 has biased composition (polar residues); that stretch reads FLTQRSPQRTSGTATA. The span at 97–108 shows a compositional bias: basic residues; the sequence is GGRRRKHSRPRW. The chain crosses the membrane as a helical span at residues 240-260; it reads GLSLLTFAFVVGFSTFLTNCI. Over 261–288 the chain is Lumenal; it reads DYRNFRGSRKMDDILIQQCTKKMSMSST. The chain crosses the membrane as a helical span at residues 289-309; it reads FLLWLLTVFWIGKAFQYLMDI. Residues 310–455 lie on the Cytoplasmic side of the membrane; it reads RRLKHMHDFY…KALSEGLRRR (146 aa). An intramembrane segment occupies 456-476; sequence FIFAGIMNIFVAPFIVVYFLM. The Cytoplasmic portion of the chain corresponds to 477 to 542; the sequence is HYFFRYFNEY…QFPKDKTVQV (66 aa). Residues 543–563 form a helical membrane-spanning segment; that stretch reads AGFVAFVSGALASVLALVSII. Residues 564 to 577 are Lumenal-facing; the sequence is DPELFLGFEITHDR. Residues 578–598 form a helical membrane-spanning segment; the sequence is TVLFYLGVFGSVWAFARGLVP. Topologically, residues 599 to 644 are cytoplasmic; the sequence is EETNVFDPEFALLEVIDFTHYFPNHWKGRLHSDEVRKEFAVLYQMK. Residues 645 to 665 lie within the membrane without spanning it; sequence IVIFLEEILSMIFTPFILWFS. At 666-951 the chain is on the cytoplasmic side; it reads LPKCSDRLID…DNRGRTTVGI (286 aa). Residues 848-897 form a disordered region; sequence SRPVRPITDPIEDDNESPSAEIRRGAVKKSPHTTTGSSGGAIGTSDSNLG.

This sequence belongs to the ATG9 family. As to quaternary structure, homotrimer; forms a homotrimer with a central pore that forms a path between the two membrane leaflets. Post-translationally, phosphorylated by atg1. Atg1 phosphorylation is required for preautophagosome elongation.

Its subcellular location is the preautophagosomal structure membrane. The protein localises to the cytoplasmic vesicle membrane. The protein resides in the golgi apparatus membrane. It is found in the endoplasmic reticulum membrane. The catalysed reaction is a 1,2-diacyl-sn-glycero-3-phosphocholine(in) = a 1,2-diacyl-sn-glycero-3-phosphocholine(out). It catalyses the reaction a 1,2-diacyl-sn-glycero-3-phospho-L-serine(in) = a 1,2-diacyl-sn-glycero-3-phospho-L-serine(out). It carries out the reaction a 1,2-diacyl-sn-glycero-3-phosphoethanolamine(in) = a 1,2-diacyl-sn-glycero-3-phosphoethanolamine(out). The enzyme catalyses a 1,2-diacyl-sn-glycero-3-phospho-(1D-myo-inositol-3-phosphate)(in) = a 1,2-diacyl-sn-glycero-3-phospho-(1D-myo-inositol-3-phosphate)(out). Phospholipid scramblase involved in autophagy and cytoplasm to vacuole transport (Cvt) vesicle formation. Cycles between the preautophagosomal structure/phagophore assembly site (PAS) and the cytoplasmic vesicle pool and supplies membrane for the growing autophagosome. Lipid scramblase activity plays a key role in preautophagosomal structure/phagophore assembly by distributing the phospholipids that arrive through atg2 from the cytoplasmic to the luminal leaflet of the bilayer, thereby driving autophagosomal membrane expansion. Required for mitophagy. Also involved in endoplasmic reticulum-specific autophagic process and is essential for the survival of cells subjected to severe ER stress. Different machineries are required for anterograde trafficking to the PAS during either the Cvt pathway or bulk autophagy and for retrograde trafficking. This chain is Autophagy-related protein 9 (atg9), found in Aspergillus oryzae (strain ATCC 42149 / RIB 40) (Yellow koji mold).